A 520-amino-acid polypeptide reads, in one-letter code: Pleckstrin homology domain-containing family A member 8 (520 aa).

Residues 1–93 form the PH domain; that stretch reads MEGVLYKWTN…WLVALGSAKA (93 aa). Thr139 carries the phosphothreonine modification. Ser145 carries the post-translational modification Phosphoserine. Thr153 bears the Phosphothreonine mark. Polar residues predominate over residues 255 to 268; it reads ISSEENTDGNTTVQ. Residues 255-303 form a disordered region; sequence ISSEENTDGNTTVQGERMKEDGEENLESHDRDLAQPGSDSVCSPESPWE. Residues 270 to 287 show a composition bias toward basic and acidic residues; it reads ERMKEDGEENLESHDRDL. Residues 311–520 form a glycolipid transfer protein homology domain region; that stretch reads TFFSTMNTSF…IHGLESDEVV (210 aa).

Homodimer. Interacts with ARF1; the interaction together with phosphatidylinositol 4-phosphate binding is required for FAPP2 GlcCer transfer ability.

It is found in the golgi apparatus. The protein resides in the trans-Golgi network membrane. The protein localises to the membrane. Functionally, cargo transport protein that is required for apical transport from the trans-Golgi network (TGN). Transports AQP2 from the trans-Golgi network (TGN) to sites of AQP2 phosphorylation. Mediates the non-vesicular transport of glucosylceramide (GlcCer) from the trans-Golgi network (TGN) to the plasma membrane and plays a pivotal role in the synthesis of complex glycosphingolipids. Binding of both phosphatidylinositol 4-phosphate (PIP) and ARF1 are essential for the GlcCer transfer ability. Also required for primary cilium formation, possibly by being involved in the transport of raft lipids to the apical membrane, and for membrane tubulation. The sequence is that of Pleckstrin homology domain-containing family A member 8 (Plekha8) from Rattus norvegicus (Rat).